Here is a 488-residue protein sequence, read N- to C-terminus: Ribulose bisphosphate carboxylase large chain (488 aa).

Residues asparagine 127 and threonine 177 each coordinate substrate. Catalysis depends on lysine 179, which acts as the Proton acceptor. Lysine 181 contributes to the substrate binding site. Positions 205, 207, and 208 each coordinate Mg(2+). N6-carboxylysine is present on lysine 205. Histidine 297 functions as the Proton acceptor in the catalytic mechanism. Positions 298, 330, and 382 each coordinate substrate.

This sequence belongs to the RuBisCO large chain family. Type I subfamily. In terms of assembly, heterohexadecamer of 8 large chains and 8 small chains. Requires Mg(2+) as cofactor.

It localises to the plastid. It is found in the chloroplast. It carries out the reaction 2 (2R)-3-phosphoglycerate + 2 H(+) = D-ribulose 1,5-bisphosphate + CO2 + H2O. The enzyme catalyses D-ribulose 1,5-bisphosphate + O2 = 2-phosphoglycolate + (2R)-3-phosphoglycerate + 2 H(+). In terms of biological role, ruBisCO catalyzes two reactions: the carboxylation of D-ribulose 1,5-bisphosphate, the primary event in carbon dioxide fixation, as well as the oxidative fragmentation of the pentose substrate in the photorespiration process. Both reactions occur simultaneously and in competition at the same active site. This is Ribulose bisphosphate carboxylase large chain from Cyanidioschyzon merolae (strain NIES-3377 / 10D) (Unicellular red alga).